A 162-amino-acid chain; its full sequence is Transcription elongation factor GreA (162 aa).

Residues 45–65 (NAEYHAAKERQLFIEARINEL) adopt a coiled-coil conformation.

This sequence belongs to the GreA/GreB family.

Necessary for efficient RNA polymerase transcription elongation past template-encoded arresting sites. The arresting sites in DNA have the property of trapping a certain fraction of elongating RNA polymerases that pass through, resulting in locked ternary complexes. Cleavage of the nascent transcript by cleavage factors such as GreA or GreB allows the resumption of elongation from the new 3'terminus. GreA releases sequences of 2 to 3 nucleotides. This is Transcription elongation factor GreA from Wolinella succinogenes (strain ATCC 29543 / DSM 1740 / CCUG 13145 / JCM 31913 / LMG 7466 / NCTC 11488 / FDC 602W) (Vibrio succinogenes).